A 547-amino-acid chain; its full sequence is Probable bifunctional tRNA threonylcarbamoyladenosine biosynthesis protein (547 aa).

A kae1 region spans residues 1–329 (MKNTFILGIE…FRTDDVNVTW (329 aa)). Fe cation is bound by residues His113, His117, and Tyr134. L-threonylcarbamoyladenylate contacts are provided by residues 134–138 (YVSGA), Asp166, Gly179, Glu183, and Asn262. Residue Asp290 coordinates Fe cation. The region spanning 340–547 (EISPEAFLRA…EEIKKRARYA (208 aa)) is the Protein kinase domain. ATP is bound by residues 355 to 363 (LDNGAEAVI) and Lys377. Asp464 acts as the Proton acceptor; for kinase activity in catalysis.

It in the N-terminal section; belongs to the KAE1 / TsaD family. The protein in the C-terminal section; belongs to the protein kinase superfamily. Tyr protein kinase family. BUD32 subfamily. As to quaternary structure, component of the KEOPS complex that consists of Kae1, Bud32, Cgi121 and Pcc1; the whole complex dimerizes. Fe(2+) serves as cofactor.

The protein localises to the cytoplasm. The catalysed reaction is L-seryl-[protein] + ATP = O-phospho-L-seryl-[protein] + ADP + H(+). The enzyme catalyses L-threonyl-[protein] + ATP = O-phospho-L-threonyl-[protein] + ADP + H(+). It catalyses the reaction L-threonylcarbamoyladenylate + adenosine(37) in tRNA = N(6)-L-threonylcarbamoyladenosine(37) in tRNA + AMP + H(+). Required for the formation of a threonylcarbamoyl group on adenosine at position 37 (t(6)A37) in tRNAs that read codons beginning with adenine. Is a component of the KEOPS complex that is probably involved in the transfer of the threonylcarbamoyl moiety of threonylcarbamoyl-AMP (TC-AMP) to the N6 group of A37. The Kae1 domain likely plays a direct catalytic role in this reaction. The Bud32 domain probably displays kinase activity that regulates Kae1 function. The sequence is that of Probable bifunctional tRNA threonylcarbamoyladenosine biosynthesis protein from Methanosarcina acetivorans (strain ATCC 35395 / DSM 2834 / JCM 12185 / C2A).